Here is a 468-residue protein sequence, read N- to C-terminus: MNLSLSDLHRQVSRLVQQESGDCTGKLRGNVAANKETTFQGLTIASGARESEKVFAQTVLSHVANVVLTQEDTAKLLQSTVKHNLNNYDLRSVGNGNSVLVSLRSDQMTLQDAKVLLEAALRQESGARGHVSSHSHSALHAPGTPVREGLRSHLDPRTPPLPPRERPHTSGHHGAGEARATAPSTVSPYGPEARAELSSRLTTLRNTLAPATNDPRYLQACGGEKLNRFRDIQCCRQTAVRADLNANYIQVGNTRTIACQYPLQSQLESHFRMLAENRTPVLAVLASSSEIANQRFGMPDYFRQSGTYGSITVESKMTQQVGLGDGIMADMYTLTIREAGQKTISVPVVHVGNWPDQTAVSSEVTKALASLVDQTAETKRNMYESKGSSAVGDDSKLRPVIHCRAGVGRTAQLIGAMCMNDSRNSQLSVEDMVSQMRVQRNGIMVQKDEQLDVLIKLAEGQGRPLLNS.

A disordered region spans residues 127-194 (ARGHVSSHSH…TVSPYGPEAR (68 aa)). The segment covering 130 to 141 (HVSSHSHSALHA) has biased composition (low complexity). In terms of domain architecture, Tyrosine-protein phosphatase spans 152–461 (SHLDPRTPPL…DVLIKLAEGQ (310 aa)). Cys-403 (phosphocysteine intermediate) is an active-site residue.

The protein belongs to the protein-tyrosine phosphatase family. Non-receptor class subfamily.

The protein resides in the secreted. The catalysed reaction is O-phospho-L-tyrosyl-[protein] + H2O = L-tyrosyl-[protein] + phosphate. Its function is as follows. Essential virulence determinant. This protein is a protein tyrosine phosphatase. The essential function of YopH in Yersinia pathogenesis is host-protein dephosphorylation. It contributes to the ability of the bacteria to resist phagocytosis by peritoneal macrophages. This chain is Tyrosine-protein phosphatase YopH (yopH), found in Yersinia pseudotuberculosis serotype I (strain IP32953).